The following is an 84-amino-acid chain: MKVSVLITLAVLGVMFLFTSAEERGSDQMDSPAWLKSMEIIFQSEERECRWLFGGCEKDSDCCEHLGCRRAKPSWCGWDFTVGK.

The N-terminal stretch at 1-21 (MKVSVLITLAVLGVMFLFTSA) is a signal peptide. The propeptide occupies 22–47 (EERGSDQMDSPAWLKSMEIIFQSEER). 3 cysteine pairs are disulfide-bonded: Cys-49–Cys-63, Cys-56–Cys-68, and Cys-62–Cys-76. Val-82 carries the valine amide modification.

Belongs to the neurotoxin 10 (Hwtx-1) family. 05 (F4a) subfamily. As to expression, expressed by the venom gland.

The protein resides in the secreted. Functionally, probable ion channel inhibitor. The chain is U21-theraphotoxin-Cg1a 2 from Chilobrachys guangxiensis (Chinese earth tiger tarantula).